The following is a 314-amino-acid chain: ATP synthase gamma chain (314 aa).

It belongs to the ATPase gamma chain family. In terms of assembly, F-type ATPases have 2 components, CF(1) - the catalytic core - and CF(0) - the membrane proton channel. CF(1) has five subunits: alpha(3), beta(3), gamma(1), delta(1), epsilon(1). CF(0) has three main subunits: a, b and c.

The protein resides in the cellular thylakoid membrane. Its function is as follows. Produces ATP from ADP in the presence of a proton gradient across the membrane. The gamma chain is believed to be important in regulating ATPase activity and the flow of protons through the CF(0) complex. This Synechococcus sp. (strain JA-2-3B'a(2-13)) (Cyanobacteria bacterium Yellowstone B-Prime) protein is ATP synthase gamma chain.